The chain runs to 354 residues: DNA-binding protein EMBP-1 (354 aa).

Disordered regions lie at residues 1 to 24, 106 to 193, and 230 to 273; these read MASSSSATSGDDRPPAAGGGTPAQ, SAAG…RSAS, and EVNA…RKQQ. Composition is skewed to low complexity over residues 127–140 and 232–245; these read SSSGSGDAGSQGSS and NAAASSQSNASLSQ. A compositionally biased stretch (basic and acidic residues) spans 246–265; that stretch reads MDERELKRERRKQSNRESAR. Positions 250-313 constitute a bZIP domain; that stretch reads ELKRERRKQS…KTMETENKKL (64 aa). The tract at residues 252–271 is basic motif; sequence KRERRKQSNRESARRSRLRK. Residues 278–299 form a leucine-zipper region; it reads LAQKVSELTAANGTLRSELDQL.

This sequence belongs to the bZIP family. In terms of assembly, heterodimer.

It is found in the nucleus. Functionally, interacts specifically with the 8-bp sequence 5'-CACGTGGC-3'in the abscisic acid response element (ABARE). Also binds to the hexamer motif 5'-ACGTCA-3' of histone gene promoters. This is DNA-binding protein EMBP-1 from Triticum aestivum (Wheat).